The chain runs to 61 residues: UPF0434 protein PSPPH_1629 (61 aa).

Belongs to the UPF0434 family.

This Pseudomonas savastanoi pv. phaseolicola (strain 1448A / Race 6) (Pseudomonas syringae pv. phaseolicola (strain 1448A / Race 6)) protein is UPF0434 protein PSPPH_1629.